A 1792-amino-acid polypeptide reads, in one-letter code: Non-reducing polyketide synthase aptA (1792 aa).

Positions 1–395 are N-terminal acylcarrier protein transacylase domain (SAT); sequence MKDNTHSTTL…PRSFAHSKLA (395 aa). In terms of domain architecture, Ketosynthase family 3 (KS3) spans 391-824; sequence HSKLAVVGMA…GGNTTVLLED (434 aa). Active-site for beta-ketoacyl synthase activity residues include Cys-564, His-699, and His-742. Positions 926-1243 are malonyl-CoA:ACP transacylase (MAT) domain; sequence VFAFTGQGAF…NLVALHLAGC (318 aa). Residues 1308–1625 form a product template (PT) domain region; sequence TSLIHEIIEE…PRLLMDRFFS (318 aa). The tract at residues 1312-1447 is N-terminal hotdog fold; sequence HEIIEETIGE…GSVRFEADAE (136 aa). The PKS/mFAS DH domain occupies 1312–1621; the sequence is HEIIEETIGE…FRRVPRLLMD (310 aa). His-1344 serves as the catalytic Proton acceptor; for dehydratase activity. A C-terminal hotdog fold region spans residues 1475-1621; it reads QASQLSKALS…FRRVPRLLMD (147 aa). Catalysis depends on Asp-1533, which acts as the Proton donor; for dehydratase activity. Low complexity predominate over residues 1634-1649; it reads VAASASSAPKTATKHA. Residues 1634–1716 are disordered; sequence VAASASSAPK…GPNGTTSQPE (83 aa). Residues 1664–1684 are compositionally biased toward polar residues; sequence TPSSLPTVQAQNTSPPQQVTP. A compositionally biased stretch (basic and acidic residues) spans 1694 to 1705; that stretch reads TPEEEKPGKADA. The Carrier domain maps to 1715–1792; that stretch reads PEATGVVGQC…DMMDWLEQYC (78 aa). An O-(pantetheine 4'-phosphoryl)serine modification is found at Ser-1752.

Pantetheine 4'-phosphate serves as cofactor.

The enzyme catalyses holo-[ACP] + 8 malonyl-CoA + acetyl-CoA + 8 H(+) = 3,6,8,9-tetrahydroxy-1-oxo-3-(2-oxopropyl)-1,2,3,4-tetrahydroanthracene-2-carboxyl-[ACP] + 8 CO2 + 9 CoA + 2 H2O. It participates in secondary metabolite biosynthesis. Non-reducing polyketide synthase (NRPKS); part of the gene cluster that mediates the biosynthesis of asperthecin, an anthraquinone pigment. Catalyzes the formation of the aromatic polyketide from acetyl coenzyme A and seven malonyl coenzyme A molecules. Through its product template (PT) domain, catalyzes the cyclization of the polyketide backbone via C6-C11 aldolcondensation. Polyketide is subsequently hydrolyzed from the NRPKS by the action of the hydrolase aptB into endocrocin-9-anthrone. Endocrocin-9-anthrone is then oxidized into endocrocin by aptC. Endocrocin is likely to decarboxylate spontaneously to form emodin which explains why there is no decarboxylase in the asperthecin biosynthesis cluster. Finally, aptC or another endogenous oxygenase catalyzes additional oxidation steps to form asperthecin. In Emericella nidulans (strain FGSC A4 / ATCC 38163 / CBS 112.46 / NRRL 194 / M139) (Aspergillus nidulans), this protein is Non-reducing polyketide synthase aptA.